The following is a 152-amino-acid chain: SsrA-binding protein (152 aa).

It belongs to the SmpB family.

It localises to the cytoplasm. In terms of biological role, required for rescue of stalled ribosomes mediated by trans-translation. Binds to transfer-messenger RNA (tmRNA), required for stable association of tmRNA with ribosomes. tmRNA and SmpB together mimic tRNA shape, replacing the anticodon stem-loop with SmpB. tmRNA is encoded by the ssrA gene; the 2 termini fold to resemble tRNA(Ala) and it encodes a 'tag peptide', a short internal open reading frame. During trans-translation Ala-aminoacylated tmRNA acts like a tRNA, entering the A-site of stalled ribosomes, displacing the stalled mRNA. The ribosome then switches to translate the ORF on the tmRNA; the nascent peptide is terminated with the 'tag peptide' encoded by the tmRNA and targeted for degradation. The ribosome is freed to recommence translation, which seems to be the essential function of trans-translation. This is SsrA-binding protein from Sulfurihydrogenibium sp. (strain YO3AOP1).